The chain runs to 321 residues: tRNA(Ile)-lysidine synthase (321 aa).

Position 30–35 (30–35 (SGGSDS)) interacts with ATP.

Belongs to the tRNA(Ile)-lysidine synthase family.

The protein localises to the cytoplasm. The catalysed reaction is cytidine(34) in tRNA(Ile2) + L-lysine + ATP = lysidine(34) in tRNA(Ile2) + AMP + diphosphate + H(+). Ligates lysine onto the cytidine present at position 34 of the AUA codon-specific tRNA(Ile) that contains the anticodon CAU, in an ATP-dependent manner. Cytidine is converted to lysidine, thus changing the amino acid specificity of the tRNA from methionine to isoleucine. The protein is tRNA(Ile)-lysidine synthase of Chlamydia trachomatis serovar A (strain ATCC VR-571B / DSM 19440 / HAR-13).